The chain runs to 378 residues: Chaperone protein DnaJ (378 aa).

In terms of domain architecture, J spans 3–67 (DYYDLLGVSK…QTRGRYDQFG (65 aa)). The segment at 133–215 (GQEREIKIPH…CAGQGVRQVR (83 aa)) adopts a CR-type zinc-finger fold. Residues Cys-146, Cys-149, Cys-163, Cys-166, Cys-189, Cys-192, Cys-203, and Cys-206 each coordinate Zn(2+). 4 CXXCXGXG motif repeats span residues 146 to 153 (CDTCNGTG), 163 to 170 (CSTCGGVG), 189 to 196 (CPSCEGTG), and 203 to 210 (CPACAGQG).

Belongs to the DnaJ family. As to quaternary structure, homodimer. It depends on Zn(2+) as a cofactor.

The protein resides in the cytoplasm. Functionally, participates actively in the response to hyperosmotic and heat shock by preventing the aggregation of stress-denatured proteins and by disaggregating proteins, also in an autonomous, DnaK-independent fashion. Unfolded proteins bind initially to DnaJ; upon interaction with the DnaJ-bound protein, DnaK hydrolyzes its bound ATP, resulting in the formation of a stable complex. GrpE releases ADP from DnaK; ATP binding to DnaK triggers the release of the substrate protein, thus completing the reaction cycle. Several rounds of ATP-dependent interactions between DnaJ, DnaK and GrpE are required for fully efficient folding. Also involved, together with DnaK and GrpE, in the DNA replication of plasmids through activation of initiation proteins. In Prochlorococcus marinus (strain MIT 9313), this protein is Chaperone protein DnaJ.